Here is a 381-residue protein sequence, read N- to C-terminus: 5-amino-6-(D-ribitylamino)uracil--L-tyrosine 4-hydroxyphenyl transferase (381 aa).

A Radical SAM core domain is found at 59–306; it reads VTYVVNRNIN…TAVARIFLGN (248 aa). Cysteine 73, cysteine 77, and cysteine 80 together coordinate [4Fe-4S] cluster.

This sequence belongs to the radical SAM superfamily. CofH family. As to quaternary structure, consists of two subunits, CofG and CofH. [4Fe-4S] cluster serves as cofactor.

It catalyses the reaction 5-amino-6-(D-ribitylamino)uracil + L-tyrosine + S-adenosyl-L-methionine = 5-amino-5-(4-hydroxybenzyl)-6-(D-ribitylimino)-5,6-dihydrouracil + 2-iminoacetate + 5'-deoxyadenosine + L-methionine + H(+). The protein operates within cofactor biosynthesis; coenzyme F0 biosynthesis. Functionally, catalyzes the radical-mediated synthesis of 5-amino-5-(4-hydroxybenzyl)-6-(D-ribitylimino)-5,6-dihydrouracil from 5-amino-6-(D-ribitylamino)uracil and L-tyrosine. This Cyanothece sp. (strain PCC 7425 / ATCC 29141) protein is 5-amino-6-(D-ribitylamino)uracil--L-tyrosine 4-hydroxyphenyl transferase.